A 358-amino-acid polypeptide reads, in one-letter code: Nicotinate-nucleotide--dimethylbenzimidazole phosphoribosyltransferase (358 aa).

E323 serves as the catalytic Proton acceptor.

The protein belongs to the CobT family.

It catalyses the reaction 5,6-dimethylbenzimidazole + nicotinate beta-D-ribonucleotide = alpha-ribazole 5'-phosphate + nicotinate + H(+). Its pathway is nucleoside biosynthesis; alpha-ribazole biosynthesis; alpha-ribazole from 5,6-dimethylbenzimidazole: step 1/2. Functionally, catalyzes the synthesis of alpha-ribazole-5'-phosphate from nicotinate mononucleotide (NAMN) and 5,6-dimethylbenzimidazole (DMB). This Oleidesulfovibrio alaskensis (strain ATCC BAA-1058 / DSM 17464 / G20) (Desulfovibrio alaskensis) protein is Nicotinate-nucleotide--dimethylbenzimidazole phosphoribosyltransferase.